We begin with the raw amino-acid sequence, 276 residues long: NH(3)-dependent NAD(+) synthetase (276 aa).

39–46 (GLSGGVDS) lines the ATP pocket. Residue Asp-45 participates in Mg(2+) binding. Arg-123 contributes to the deamido-NAD(+) binding site. ATP is bound at residue Thr-143. A Mg(2+)-binding site is contributed by Glu-148. Deamido-NAD(+) is bound by residues Lys-156 and Asp-163. ATP is bound by residues Lys-172 and Ser-194. 254–255 (HK) contributes to the deamido-NAD(+) binding site.

This sequence belongs to the NAD synthetase family. Homodimer.

The catalysed reaction is deamido-NAD(+) + NH4(+) + ATP = AMP + diphosphate + NAD(+) + H(+). It participates in cofactor biosynthesis; NAD(+) biosynthesis; NAD(+) from deamido-NAD(+) (ammonia route): step 1/1. Its function is as follows. Catalyzes the ATP-dependent amidation of deamido-NAD to form NAD. Uses ammonia as a nitrogen source. This Hyperthermus butylicus (strain DSM 5456 / JCM 9403 / PLM1-5) protein is NH(3)-dependent NAD(+) synthetase.